The primary structure comprises 397 residues: Acetate kinase 2 (397 aa).

Asn8 provides a ligand contact to Mg(2+). Lys15 serves as a coordination point for ATP. Arg89 is a binding site for substrate. The Proton donor/acceptor role is filled by Asp146. Residues 206–210 (HLGNG), 281–283 (DFR), and 329–333 (GVGEN) contribute to the ATP site. Glu380 contacts Mg(2+).

Belongs to the acetokinase family. Homodimer. Mg(2+) serves as cofactor. Requires Mn(2+) as cofactor.

The protein resides in the cytoplasm. The enzyme catalyses acetate + ATP = acetyl phosphate + ADP. It participates in metabolic intermediate biosynthesis; acetyl-CoA biosynthesis; acetyl-CoA from acetate: step 1/2. In terms of biological role, catalyzes the formation of acetyl phosphate from acetate and ATP. Can also catalyze the reverse reaction. The sequence is that of Acetate kinase 2 from Listeria monocytogenes serovar 1/2a (strain ATCC BAA-679 / EGD-e).